Here is a 111-residue protein sequence, read N- to C-terminus: Toxin 3FTx-Tri2 (111 aa).

An N-terminal signal peptide occupies residues 1–19; it reads MKTLLLALVVLAFVCLGSA. A propeptide spanning residues 20-34 is cleaved from the precursor; sequence DQVGLGKEQIDRGRR. Q35 is modified (pyrrolidone carboxylic acid). 5 disulfides stabilise this stretch: C44-C68, C47-C55, C61-C87, C91-C102, and C103-C108.

The protein belongs to the three-finger toxin family. Ancestral subfamily. Boigatoxin sub-subfamily. Expressed by the venom gland.

It is found in the secreted. Functionally, potent postsynaptic neurotoxin. Displays readily reversible competitive antagonism at the nicotinic acetylcholine receptor (nAChR). The chain is Toxin 3FTx-Tri2 from Trimorphodon biscutatus (Western lyre snake).